A 419-amino-acid polypeptide reads, in one-letter code: G protein-activated inward rectifier potassium channel 4 (419 aa).

Residues 1–86 (MAGDSRNAMN…LFTTLVDLKW (86 aa)) lie on the Cytoplasmic side of the membrane. Residue Ser-5 is modified to Phosphoserine. The chain crosses the membrane as a helical span at residues 87 to 111 (RFNLLVFTMVYTITWLFFGFIWWLI). Over 112-135 (AYVRGDLDHVGDQEWIPCVENLSG) the chain is Extracellular. An intramembrane region (helical; Pore-forming) is located at residues 136 to 147 (FVSAFLFSIETE). The segment at residues 148–154 (TTIGYGF) is an intramembrane region (pore-forming). Positions 149-154 (TIGYGF) match the Selectivity filter motif. Residues 155–163 (RVITEKCPE) lie on the Extracellular side of the membrane. The helical transmembrane segment at 164 to 185 (GIILLLVQAILGSIVNAFMVGC) threads the bilayer. Topologically, residues 186–419 (MFVKISQPKK…SVSRATRGSM (234 aa)) are cytoplasmic. Residues 380-390 (LPSPPLLGGCA) are compositionally biased toward low complexity. The interval 380–419 (LPSPPLLGGCAEAEKEAEAEHDEEEEPNGLSVSRATRGSM) is disordered. Residues 409-419 (LSVSRATRGSM) are compositionally biased toward polar residues.

The protein belongs to the inward rectifier-type potassium channel (TC 1.A.2.1) family. KCNJ5 subfamily. Associates with KCNJ3/GIRK1 or KCNJ6/GRIK2 to form a G-protein-activated heteromultimer pore-forming unit. The resulting inward current is much larger. As to expression, most abundant in heart tissue where it is found predominantly in atria. Also found in brain, kidney, liver, spleen, lung and thymus.

Its subcellular location is the membrane. It catalyses the reaction K(+)(in) = K(+)(out). With respect to regulation, heteromultimer composed of KCNJ3/GIRK1 and KCNJ5/GIRK4 is activated by phosphatidylinositol 4,5 biphosphate (PtdIns(4,5)P2). In terms of biological role, inward rectifier potassium channels are characterized by a greater tendency to allow potassium to flow into the cell rather than out of it. Their voltage dependence is regulated by the concentration of extracellular potassium; as external potassium is raised, the voltage range of the channel opening shifts to more positive voltages. The inward rectification is mainly due to the blockage of outward current by internal magnesium. Can be blocked by external barium. This potassium channel is controlled by G proteins. This Rattus norvegicus (Rat) protein is G protein-activated inward rectifier potassium channel 4 (Kcnj5).